Reading from the N-terminus, the 3081-residue chain is Cilia- and flagella-associated protein 54 (3081 aa).

Disordered stretches follow at residues 542-579 (SGTA…AGGA), 591-626 (TQTA…QSSL), 910-942 (PPQP…GARK), 1406-1451 (ADAP…GITP), 1518-1586 (ESIL…YPVV), 1636-1657 (RRAA…EERP), 2176-2210 (GERT…LPEP), 2229-2306 (MASG…SQRA), and 2776-2806 (ARPV…SGDG). Residues 564–579 (GGSASPPNGSSGAGGA) show a composition bias toward low complexity. Positions 1428–1449 (MPPPVPDPSAAGPPPLTPPEGI) are enriched in pro residues. The span at 1538–1550 (GGKDDKKKDDKAP) shows a compositional bias: basic and acidic residues. Low complexity-rich tracts occupy residues 1638-1648 (AALAASASTAG), 2181-2199 (APKP…AAAA), and 2240-2269 (EPSS…SPTG). The span at 2289 to 2301 (PEVPGPPPPPPPS) shows a compositional bias: pro residues. Residues 2776–2788 (ARPVATSSSGARP) show a composition bias toward low complexity. Residues 2796 to 2805 (KPGAGGGSGD) are compositionally biased toward gly residues.

This sequence belongs to the CFAP54 family. As to quaternary structure, part of the PDCP1 complex composed of CFAP46, CFAP54, CFAP74 and CFAP221; the PDCP1 complex binds calmodulin.

Its subcellular location is the cytoplasm. The protein localises to the cytoskeleton. It is found in the cilium axoneme. The chain is Cilia- and flagella-associated protein 54 from Chlamydomonas reinhardtii (Chlamydomonas smithii).